A 469-amino-acid polypeptide reads, in one-letter code: Proline--tRNA ligase (469 aa).

The protein belongs to the class-II aminoacyl-tRNA synthetase family. ProS type 3 subfamily. Homodimer.

It localises to the cytoplasm. It catalyses the reaction tRNA(Pro) + L-proline + ATP = L-prolyl-tRNA(Pro) + AMP + diphosphate. Its function is as follows. Catalyzes the attachment of proline to tRNA(Pro) in a two-step reaction: proline is first activated by ATP to form Pro-AMP and then transferred to the acceptor end of tRNA(Pro). The chain is Proline--tRNA ligase from Methanosphaera stadtmanae (strain ATCC 43021 / DSM 3091 / JCM 11832 / MCB-3).